A 615-amino-acid chain; its full sequence is Elongation factor 4 (615 aa).

In terms of domain architecture, tr-type G spans 17 to 198; it reads ASIRNFCIIA…RVSRTIPAPV (182 aa). Residues 29–34 and 145–148 each bind GTP; these read DHGKST and NKID.

Belongs to the TRAFAC class translation factor GTPase superfamily. Classic translation factor GTPase family. LepA subfamily.

The protein resides in the cell membrane. The enzyme catalyses GTP + H2O = GDP + phosphate + H(+). Functionally, required for accurate and efficient protein synthesis under certain stress conditions. May act as a fidelity factor of the translation reaction, by catalyzing a one-codon backward translocation of tRNAs on improperly translocated ribosomes. Back-translocation proceeds from a post-translocation (POST) complex to a pre-translocation (PRE) complex, thus giving elongation factor G a second chance to translocate the tRNAs correctly. Binds to ribosomes in a GTP-dependent manner. In Clavibacter michiganensis subsp. michiganensis (strain NCPPB 382), this protein is Elongation factor 4.